A 989-amino-acid polypeptide reads, in one-letter code: Cellulose synthase A catalytic subunit 4 [UDP-forming] (989 aa).

Residues 1–184 (MMESGVPPCA…SRIIPISKNK (184 aa)) lie on the Cytoplasmic side of the membrane. Residues cysteine 9, cysteine 12, cysteine 20, cysteine 23, cysteine 28, cysteine 31, cysteine 43, and cysteine 46 each coordinate Zn(2+). An RING-type; degenerate zinc finger spans residues 9–47 (CAACGDDAHAACRACSYALCKACLDEDAAEGRTTCARCG). The span at 138-149 (KKEKKASAKKAA) shows a compositional bias: basic residues. The tract at residues 138–158 (KKEKKASAKKAAAKAQAPPVE) is disordered. The chain crosses the membrane as a helical span at residues 185 to 205 (LTPYRAVIIMRLVVLGLFFHY). The Extracellular segment spans residues 206–213 (RITNPVYS). A helical transmembrane segment spans residues 214 to 234 (AFGLWMTSVICEIWFGFSWIL). Residues 235–772 (DQFPKWCPIN…INTIVYPFTS (538 aa)) lie on the Cytoplasmic side of the membrane. Residues serine 272, lysine 278, glutamate 279, and aspartate 308 each contribute to the UDP-alpha-D-glucose site. Residue aspartate 308 is part of the active site. Positions 362–389 (VKERRAMKRDYEEYKVRINALVAKAQKT) form a coiled coil. Lysine 449 contributes to the UDP-alpha-D-glucose binding site. Lysine 450 and aspartate 474 together coordinate Mn(2+). Residue aspartate 688 is part of the active site. Residues 773-793 (LPLIAYCCLPAICLLTGKFII) form a helical membrane-spanning segment. Over 794–798 (PTLSN) the chain is Extracellular. Residues 799–819 (AATIWFLGLFISIIVTSVLEL) traverse the membrane as a helical segment. Over 820-835 (RWSGIGIEDWWRNEQF) the chain is Cytoplasmic. Residues 836-856 (WVIGGVSAHLFAVFQGILKMI) form a helical membrane-spanning segment. Topologically, residues 857 to 884 (AGLDTNFTVTAKATDDTEFGELYVFKWT) are extracellular. Asparagine 862 is a glycosylation site (N-linked (GlcNAc...) asparagine). Residues 885–905 (TVLIPPTSILVLNLVGVVAGF) form a helical membrane-spanning segment. Residues 906–916 (SDALNSGYESW) are Cytoplasmic-facing. A helical transmembrane segment spans residues 917 to 937 (GPLFGKVFFAMWVIMHLYPFL). Over 938–946 (KGLMGRQNR) the chain is Extracellular. A helical membrane pass occupies residues 947-967 (TPTIVVLWSVLLASVFSLLWV). Residues 968–989 (KIDPFIGSSETTTTNSCANFDC) lie on the Cytoplasmic side of the membrane.

It belongs to the glycosyltransferase 2 family. Plant cellulose synthase subfamily. The cofactor is Mn(2+). Zn(2+) serves as cofactor.

Its subcellular location is the cell membrane. It catalyses the reaction [(1-&gt;4)-beta-D-glucosyl](n) + UDP-alpha-D-glucose = [(1-&gt;4)-beta-D-glucosyl](n+1) + UDP + H(+). It functions in the pathway glycan metabolism; plant cellulose biosynthesis. In terms of biological role, catalytic subunit of cellulose synthase terminal complexes ('rosettes'), required for beta-1,4-glucan microfibril crystallization, a major mechanism of the cell wall formation. Involved in the secondary cell wall formation. This Oryza sativa subsp. indica (Rice) protein is Cellulose synthase A catalytic subunit 4 [UDP-forming] (CESA4).